A 123-amino-acid chain; its full sequence is Small ribosomal subunit protein uS12 (123 aa).

Residue aspartate 89 is modified to 3-methylthioaspartic acid.

Belongs to the universal ribosomal protein uS12 family. In terms of assembly, part of the 30S ribosomal subunit. Contacts proteins S8 and S17. May interact with IF1 in the 30S initiation complex.

With S4 and S5 plays an important role in translational accuracy. In terms of biological role, interacts with and stabilizes bases of the 16S rRNA that are involved in tRNA selection in the A site and with the mRNA backbone. Located at the interface of the 30S and 50S subunits, it traverses the body of the 30S subunit contacting proteins on the other side and probably holding the rRNA structure together. The combined cluster of proteins S8, S12 and S17 appears to hold together the shoulder and platform of the 30S subunit. This is Small ribosomal subunit protein uS12 from Beijerinckia indica subsp. indica (strain ATCC 9039 / DSM 1715 / NCIMB 8712).